The primary structure comprises 360 residues: UPF0283 membrane protein Oant_2119 (360 aa).

Residues 1 to 30 are disordered; it reads MTEKTPRKPASFTVSQASNRPEAADEAPRR. A run of 2 helical transmembrane segments spans residues 77–97 and 108–128; these read ILFG…TEDL and LGWT…AIVV.

Belongs to the UPF0283 family.

The protein localises to the cell inner membrane. The protein is UPF0283 membrane protein Oant_2119 of Brucella anthropi (strain ATCC 49188 / DSM 6882 / CCUG 24695 / JCM 21032 / LMG 3331 / NBRC 15819 / NCTC 12168 / Alc 37) (Ochrobactrum anthropi).